We begin with the raw amino-acid sequence, 451 residues long: Phosphoglucosamine mutase (451 aa).

The active-site Phosphoserine intermediate is the Ser-107. Positions 107, 246, 248, and 250 each coordinate Mg(2+). A Phosphoserine modification is found at Ser-107.

The protein belongs to the phosphohexose mutase family. Mg(2+) is required as a cofactor. In terms of processing, activated by phosphorylation.

It catalyses the reaction alpha-D-glucosamine 1-phosphate = D-glucosamine 6-phosphate. In terms of biological role, catalyzes the conversion of glucosamine-6-phosphate to glucosamine-1-phosphate. This is Phosphoglucosamine mutase from Burkholderia cenocepacia (strain ATCC BAA-245 / DSM 16553 / LMG 16656 / NCTC 13227 / J2315 / CF5610) (Burkholderia cepacia (strain J2315)).